The following is a 330-amino-acid chain: Carbonic anhydrase 1 (330 aa).

The segment at 1-109 is chloroplast transit peptide-like; that stretch reads MSTASAFAIN…AAARIDQITA (109 aa).

This sequence belongs to the beta-class carbonic anhydrase family. In terms of assembly, homohexamer.

Its subcellular location is the cytoplasm. The catalysed reaction is hydrogencarbonate + H(+) = CO2 + H2O. Functionally, reversible hydration of carbon dioxide. This is Carbonic anhydrase 1 from Flaveria linearis (Narrowleaf yellowtops).